The sequence spans 776 residues: Protein SEY1 (776 aa).

The Cytoplasmic portion of the chain corresponds to 1–681; sequence MADRSAIQLI…KRSIITTRTH (681 aa). One can recognise a GB1/RHD3-type G domain in the interval 34 to 263; sequence GLDYHVISVF…TENYYFKPQY (230 aa). 44-51 is a GTP binding site; it reads GSQSSGKS. The chain crosses the membrane as a helical span at residues 682 to 702; it reads IPPWIYVLLAVLGWNEFVAVI. Residues 703-705 are Lumenal-facing; sequence RNP. Residues 706-726 form a helical membrane-spanning segment; the sequence is LFVTLTLILGATFFVIHKFGL. The Cytoplasmic portion of the chain corresponds to 727–776; it reads WGPVVNVVQSAVGETRTAIKDKLRQFVVEDHEVKESFEMKDFSKNEQKEK.

It belongs to the TRAFAC class dynamin-like GTPase superfamily. GB1/RHD3 GTPase family. RHD3 subfamily. As to quaternary structure, interacts with RTN1 and YOP1; GTP binding is not required for these interactions.

The protein resides in the endoplasmic reticulum membrane. Functionally, cooperates with the reticulon proteins RTN1 and RTN2 and the tubule-shaping DP1 family protein YOP1 to generate and maintain the structure of the tubular endoplasmic reticulum network. Has GTPase activity, which is required for its function in ER organization. In Saccharomyces cerevisiae (strain YJM789) (Baker's yeast), this protein is Protein SEY1.